We begin with the raw amino-acid sequence, 129 residues long: MKPQLLALKQFVQTEFEKVDFETFRQNFNRCLEREQSTLLIYEDDDYDDQSFFLKPMLSDAFFISSEVVKQLDLLAVLVDNPKGDVKSCCQSFYEALTLFISALAITKGVDVGRYHQQLGKRFGVLTVY.

This is an uncharacterized protein from Mycoplasma pneumoniae (strain ATCC 29342 / M129 / Subtype 1) (Mycoplasmoides pneumoniae).